A 61-amino-acid polypeptide reads, in one-letter code: Probable tautomerase stu1128 (61 aa).

Pro2 acts as the Proton acceptor; via imino nitrogen in catalysis.

Belongs to the 4-oxalocrotonate tautomerase family.

This Streptococcus thermophilus (strain ATCC BAA-250 / LMG 18311) protein is Probable tautomerase stu1128.